A 130-amino-acid polypeptide reads, in one-letter code: Capsid protein (130 aa).

The tract at residues 32 to 105 (EWISSNSRSQ…FATNDDCALI (74 aa)) is viral RNA-binding.

It belongs to the Leviviricetes capsid protein family. As to quaternary structure, homodimer. The capsid proteins form dimers that assemble by group of 5. Twelve such pentamers are linked together with free dimers. The homodimers binds to the viral RNA via an operator hairpin, but also to many other RNA sequences in the viral genome; this interaction probably shifts the virus from the replicative to the assembly phase and ensures specific encapsidation of the viral genome.

The protein resides in the virion. Functionally, capsid protein self-assembles to form an icosahedral capsid with a T=3 symmetry, about 26 nm in diameter, and consisting of 89 capsid proteins dimers (178 capsid proteins). Involved in viral genome encapsidation through the interaction between a capsid protein dimer and the multiple packaging signals present in the RNA genome. The capsid also contains 1 copy of the A2 maturation protein. Its function is as follows. Acts as a translational repressor of viral replicase synthesis late in infection. This latter function is the result of capsid protein interaction with an RNA hairpin which contains the replicase ribosome-binding site. The chain is Capsid protein from Enterobacteria phage fr (Bacteriophage fr).